The primary structure comprises 134 residues: Phosphomevalonate dehydratase small subunit (134 aa).

The active-site Proton acceptor is the Ser62.

The protein belongs to the AcnX type II small subunit family. Heterodimer composed of a large subunit (PMDh-L) and a small subunit (PMDh-S).

It catalyses the reaction (R)-5-phosphomevalonate = (2E)-3-methyl-5-phosphooxypent-2-enoate + H2O. The protein operates within isoprenoid biosynthesis; isopentenyl diphosphate biosynthesis via mevalonate pathway. Component of a hydro-lyase that catalyzes the dehydration of mevalonate 5-phosphate (MVA5P) to form trans-anhydromevalonate 5-phosphate (tAHMP). Involved in the archaeal mevalonate (MVA) pathway, which provides fundamental precursors for isoprenoid biosynthesis, such as isopentenyl diphosphate (IPP) and dimethylallyl diphosphate (DMAPP). This Pyrococcus furiosus (strain ATCC 43587 / DSM 3638 / JCM 8422 / Vc1) protein is Phosphomevalonate dehydratase small subunit.